An 892-amino-acid polypeptide reads, in one-letter code: MTQYTPMIQQYLKVKADYQDAFLFFRLGDFYEMFFEDAVKAAHELEITLTSRDGGSSERIPMCGVPYHAAKNYIEQLVEKGYKVAVCEQVEDPKTAKGVVRREVVQLITPGTMMEGRTIDEKENNFLAALTHFEDGSYALACNDLTTGQNTVTLLTGSVEDILLEVYATGSKEIVVDSSFSKDELNKLTETLKMTISYEDATAIPEGLEHLVKNVSQAKLIKAVGRLFNYVIRTQKRSLDHLQPVEIYYTNQFMKIDVHSKRNLELTETLRTKEKTGSLLWLLDKTKTAMGGRMLKQWMERPLIQKERIEERLEMVETFVNDYFLREDLKEKLKEVYDLERLAGKVAFGNVNARDLLQLRRSLLQVPAILEAISLLDNAYAARLIQGADPCESLTELLGRSIQENPPLSIKDGDIIKDGYNDKLDQYRYVSKNGKTWIAELEKRERDITGIKSLKIGYNRIFGYYIEVTKANLGALPEGRYERKQTLANAERFITDELKEKETLILEAEEKIVQLEYDLFTALREEVKVFIPKLQHLAKVISELDVLQSFATVSEEEQFVKPVLTTKREIFIKDGRHPVVEKVLNGKLYVPNDCIMPENMDVFLITGPNMSGKSTYMRQLALVTVMSQIGCFVPATEAVLPVFDQIFTRIGAADDLISGQSTFMVEMLEAKNAIANASERSLILFDEIGRGTSTYDGMALAQAIIEHIHDQIGAKTLFSTHYHELTVLEDSLDQLKNVHVSAIEENGKVVFLHKIQDGAADKSYGIHVAQLAELPDSLITRAKEVLAQLEGQEEIIIPKRVEVKAQAQEVIPEPVVVKEEPVEIEETKAETEEESQLSFFGGEQSSKKQDKPVLDAKETAVLTQIKKIDLLDMTPLEAMNELYRLQKKLKKG.

Glycine 607–serine 614 is an ATP binding site. Residues glutamate 826–leucine 854 form a disordered region. Positions serine 845–leucine 854 are enriched in basic and acidic residues.

Belongs to the DNA mismatch repair MutS family.

In terms of biological role, this protein is involved in the repair of mismatches in DNA. It is possible that it carries out the mismatch recognition step. This protein has a weak ATPase activity. This chain is DNA mismatch repair protein MutS, found in Bacillus cereus (strain AH187).